The sequence spans 417 residues: E3 ubiquitin-protein ligase RNF135 (417 aa).

An RING-type zinc finger spans residues 21-67; the sequence is CIICQGLLDQPTTLPCGHSFCLRCLHDLWVSKRGAVDGCPWACPICR. Disordered regions lie at residues 95–118 and 143–173; these read EVEAGSEPEPAPAPRSAPQVTVQK and TQRPNLGSGQDNAQGTPPTDSSSEGEHSLDS. Coiled-coil stretches lie at residues 121–145 and 180–204; these read TNVIQELTDMVRQLVDDVKSLQTQR and SISQKKIQEILHNLEEIQEKLQGSV. Positions 143–164 are enriched in polar residues; that stretch reads TQRPNLGSGQDNAQGTPPTDSS. The 193-residue stretch at 225–417 folds into the B30.2/SPRY domain; sequence PDQRRPAPRK…NYLEIKQLNT (193 aa).

In terms of assembly, homodimer. Interacts (homodimer) with RIGI (double-stranded RNA-bound oligomeric form); involved in both RIGI ubiquitination, oligomerization into filaments associated with viral RNAs and the bridging of these filaments. Interacts with UBE2D3 and UBE2N; E2 ubiquitin ligases involved in RNF135-mediated ubiquitination of RIGI and activation of the RIG-I signaling pathway. Interacts with PCBP2. As to expression, ubiquitously expressed.

It localises to the cytoplasm. The protein resides in the stress granule. The enzyme catalyses S-ubiquitinyl-[E2 ubiquitin-conjugating enzyme]-L-cysteine + [acceptor protein]-L-lysine = [E2 ubiquitin-conjugating enzyme]-L-cysteine + N(6)-ubiquitinyl-[acceptor protein]-L-lysine.. The protein operates within protein modification; protein ubiquitination. Its function is as follows. E2-dependent E3 ubiquitin-protein ligase that functions as a RIGI coreceptor in the sensing of viral RNAs in cell cytoplasm and the activation of the antiviral innate immune response. Together with the UBE2D3, UBE2N and UB2V1 E2 ligases, catalyzes the 'Lys-63'-linked polyubiquitination of RIGI oligomerized on viral RNAs, an essential step in the activation of the RIG-I signaling pathway. Through a ubiquitin-independent parallel mechanism, which consists in bridging RIGI filaments forming on longer viral RNAs, further activates the RIG-I signaling pathway. This second mechanism that synergizes with the ubiquitin-dependent one would thereby allow an RNA length-dependent regulation of the RIG-I signaling pathway. Associated with the E2 ligase UBE2N, also constitutively synthesizes unanchored 'Lys-63'-linked polyubiquitin chains that may also activate the RIG-I signaling pathway. It is not involved in the innate immune response against DNA viruses. This Mus musculus (Mouse) protein is E3 ubiquitin-protein ligase RNF135.